Consider the following 169-residue polypeptide: 4-hydroxylaminobenzoate lyase (169 aa).

Belongs to the PnbB family.

It carries out the reaction 4-hydroxylaminobenzoate + H2O + H(+) = 3,4-dihydroxybenzoate + NH4(+). Lyase involved in the degradation of nitroaromatic compounds. Catalyzes the conversion of 4-hydroxylaminobenzoate to 3,4-dihydroxybenzoate (protocatechuate). This is 4-hydroxylaminobenzoate lyase from Nocardioides sp. (strain LMS-CY).